The primary structure comprises 172 residues: Large ribosomal subunit protein uL10 (172 aa).

Belongs to the universal ribosomal protein uL10 family. In terms of assembly, part of the ribosomal stalk of the 50S ribosomal subunit. The N-terminus interacts with L11 and the large rRNA to form the base of the stalk. The C-terminus forms an elongated spine to which L12 dimers bind in a sequential fashion forming a multimeric L10(L12)X complex.

In terms of biological role, forms part of the ribosomal stalk, playing a central role in the interaction of the ribosome with GTP-bound translation factors. The protein is Large ribosomal subunit protein uL10 of Idiomarina loihiensis (strain ATCC BAA-735 / DSM 15497 / L2-TR).